Consider the following 159-residue polypeptide: Probable cyclic pyranopterin monophosphate synthase accessory protein (159 aa).

The active site involves Asp-128.

This sequence belongs to the MoaC family.

The protein operates within cofactor biosynthesis; molybdopterin biosynthesis. Together with MoaA, is involved in the conversion of 5'-GTP to cyclic pyranopterin monophosphate (cPMP or molybdopterin precursor Z). The polypeptide is Probable cyclic pyranopterin monophosphate synthase accessory protein (Methanothermobacter thermautotrophicus (strain ATCC 29096 / DSM 1053 / JCM 10044 / NBRC 100330 / Delta H) (Methanobacterium thermoautotrophicum)).